The following is a 490-amino-acid chain: 2-succinylbenzoate--CoA ligase (490 aa).

The protein belongs to the ATP-dependent AMP-binding enzyme family. MenE subfamily.

The catalysed reaction is 2-succinylbenzoate + ATP + CoA = 2-succinylbenzoyl-CoA + AMP + diphosphate. It participates in quinol/quinone metabolism; 1,4-dihydroxy-2-naphthoate biosynthesis; 1,4-dihydroxy-2-naphthoate from chorismate: step 5/7. The protein operates within quinol/quinone metabolism; menaquinone biosynthesis. Its function is as follows. Converts 2-succinylbenzoate (OSB) to 2-succinylbenzoyl-CoA (OSB-CoA). In Geobacillus kaustophilus (strain HTA426), this protein is 2-succinylbenzoate--CoA ligase.